We begin with the raw amino-acid sequence, 817 residues long: E3 ubiquitin-protein ligase TRIM9 (817 aa).

The RING-type zinc-finger motif lies at 10–50; it reads CPVCGSFYREPIILPCSHNLCQACARNILVQTPESESPQSR. Thr41 bears the Phosphothreonine mark. Phosphoserine is present on residues Ser44, Ser46, Ser49, and Ser53. 2 consecutive B box-type zinc fingers follow at residues 163–212 and 224–266; these read AAAL…LVPP and RKVS…VKAL. Zn(2+) contacts are provided by Cys168, Cys171, Cys193, His198, Cys229, His232, Cys252, and His258. A coiled-coil region spans residues 273–340; sequence HKSQLSQALN…KAQLLARVNK (68 aa). Positions 374–432 constitute a COS domain; that stretch reads IKENDPSGFLQISDALIRRVHLTEDQWGKGTLTPRMTTDFDLSLDNSPLLQSIHQLDFV. Residues 440-535 form the Fibronectin type-III domain; that stretch reads VPATPILQLE…KTLVLQTSEA (96 aa). The disordered stretch occupies residues 535 to 557; sequence AAGAHETKPMKDTDSEEQTLPFP. Residues 537–547 show a composition bias toward basic and acidic residues; it reads GAHETKPMKDT. In terms of domain architecture, B30.2/SPRY spans 613–794; the sequence is ETQSASYSQL…VQVSLWAPGL (182 aa).

It belongs to the TRIM/RBCC family. As to quaternary structure, interacts with SNAP25. Auto-ubiquitinated. In terms of tissue distribution, brain. Expression is higher in the cerebral cortex and hippocampus (at protein level). Its expression is mainly confined to the central nervous system. The developing neocortex, the dorsal thalamus, the midbrain, the basal area of the hindbrain and spinal cord show high level of expression during embryogenesis. In adult brain, it is detected in the Purkinje cells of the cerebellum, in the hippocampus, and in the cortex.

The protein localises to the cytoplasm. It is found in the cell projection. Its subcellular location is the dendrite. It localises to the cytoplasmic vesicle. The protein resides in the secretory vesicle. The protein localises to the synaptic vesicle. It is found in the synapse. Its subcellular location is the cytoskeleton. The enzyme catalyses S-ubiquitinyl-[E2 ubiquitin-conjugating enzyme]-L-cysteine + [acceptor protein]-L-lysine = [E2 ubiquitin-conjugating enzyme]-L-cysteine + N(6)-ubiquitinyl-[acceptor protein]-L-lysine.. It participates in protein modification; protein ubiquitination. Functionally, E3 ubiquitin-protein ligase which ubiquitinates itself in cooperation with an E2 enzyme UBE2D2/UBC4 and serves as a targeting signal for proteasomal degradation. May play a role in regulation of neuronal functions. May act as a regulator of synaptic vesicle exocytosis by controlling the availability of SNAP25 for the SNARE complex formation. The polypeptide is E3 ubiquitin-protein ligase TRIM9 (Trim9) (Mus musculus (Mouse)).